Here is a 70-residue protein sequence, read N- to C-terminus: Turripeptide Ici9.2 (70 aa).

The first 20 residues, 1 to 20 (MKVYCLLLVLLVGLVSQAQG), serve as a signal peptide directing secretion. The Kazal-like domain occupies 21–70 (QLDKKCQTMCTMEYLPVCGSDGTTYPNKCTLTSTACVNQMDITVLHNGEC). Disulfide bonds link Cys26–Cys56, Cys30–Cys49, and Cys38–Cys70.

This sequence belongs to the conopeptide P-like superfamily. In terms of tissue distribution, expressed by the venom duct.

The protein resides in the secreted. Its function is as follows. Acts as a neurotoxin by inhibiting an ion channel. May also act as a serine protease inhibitor, since it possess the kazal serine protease inhibitor signature. The protein is Turripeptide Ici9.2 of Iotyrris cingulifera (Sea snail).